A 199-amino-acid polypeptide reads, in one-letter code: GTP cyclohydrolase-2 (199 aa).

Residue 50-54 coordinates GTP; the sequence is RIHSE. The Zn(2+) site is built by cysteine 55, cysteine 66, and cysteine 68. GTP contacts are provided by residues glutamine 71, 93–95, and threonine 115; that span reads EGR. Catalysis depends on aspartate 127, which acts as the Proton acceptor. Arginine 129 serves as the catalytic Nucleophile. 2 residues coordinate GTP: threonine 150 and lysine 155.

Belongs to the GTP cyclohydrolase II family. Homodimer. Zn(2+) serves as cofactor.

It catalyses the reaction GTP + 4 H2O = 2,5-diamino-6-hydroxy-4-(5-phosphoribosylamino)-pyrimidine + formate + 2 phosphate + 3 H(+). It participates in cofactor biosynthesis; riboflavin biosynthesis; 5-amino-6-(D-ribitylamino)uracil from GTP: step 1/4. Its function is as follows. Catalyzes the conversion of GTP to 2,5-diamino-6-ribosylamino-4(3H)-pyrimidinone 5'-phosphate (DARP), formate and pyrophosphate. In Buchnera aphidicola subsp. Baizongia pistaciae (strain Bp), this protein is GTP cyclohydrolase-2.